A 277-amino-acid chain; its full sequence is DNA adenine methylase (277 aa).

Residues tryptophan 10, lysine 14, aspartate 54, and aspartate 181 each contribute to the S-adenosyl-L-methionine site.

The protein belongs to the N(4)/N(6)-methyltransferase family.

The catalysed reaction is a 2'-deoxyadenosine in DNA + S-adenosyl-L-methionine = an N(6)-methyl-2'-deoxyadenosine in DNA + S-adenosyl-L-homocysteine + H(+). Its function is as follows. An alpha subtype methylase, recognizes the double-stranded sequence 5'-GATC-3' and methylates A-2. May be involved in methyl-directed DNA mismatch repair, initiation of chromosome replication and gene expression. The sequence is that of DNA adenine methylase from Vibrio cholerae serotype O1 (strain ATCC 39541 / Classical Ogawa 395 / O395).